We begin with the raw amino-acid sequence, 197 residues long: Pyridoxal 5'-phosphate synthase subunit PdxT (197 aa).

50–52 contacts L-glutamine; sequence GES. Residue cysteine 82 is the Nucleophile of the active site. Residues arginine 111 and 140 to 141 each bind L-glutamine; that span reads IR. Catalysis depends on charge relay system residues histidine 176 and glutamate 178.

It belongs to the glutaminase PdxT/SNO family. In terms of assembly, in the presence of PdxS, forms a dodecamer of heterodimers. Only shows activity in the heterodimer.

It carries out the reaction aldehydo-D-ribose 5-phosphate + D-glyceraldehyde 3-phosphate + L-glutamine = pyridoxal 5'-phosphate + L-glutamate + phosphate + 3 H2O + H(+). The enzyme catalyses L-glutamine + H2O = L-glutamate + NH4(+). Its pathway is cofactor biosynthesis; pyridoxal 5'-phosphate biosynthesis. Its function is as follows. Catalyzes the hydrolysis of glutamine to glutamate and ammonia as part of the biosynthesis of pyridoxal 5'-phosphate. The resulting ammonia molecule is channeled to the active site of PdxS. The protein is Pyridoxal 5'-phosphate synthase subunit PdxT of Streptomyces griseus subsp. griseus (strain JCM 4626 / CBS 651.72 / NBRC 13350 / KCC S-0626 / ISP 5235).